The following is a 352-amino-acid chain: Ion-translocating oxidoreductase complex subunit D (352 aa).

Transmembrane regions (helical) follow at residues 20–40 (IMLLVLLAAVPGIAAQLWFFG), 42–62 (GTLVQILLASVSALLAEALVL), 78–109 (ALLTGLLLAVSIPPLAPWWMVVLGTVFAVIIA), 123–143 (PAMIGYVVLLISFPVQMTSWL), and 148–168 (IAVNIPGFIDAIQVIFSGHTA). An FMN phosphoryl threonine modification is found at T187. 5 helical membrane-spanning segments follow: residues 214-234 (ILAGAGWQWVNLAWLAGGVWL), 242-262 (WHIPLSFLVTLALCAMLGWLF), 267-287 (LAAPQIHLLSGATMLGAFFIL), 301-321 (LIFGALAGLLVWLIRSFGGYP), and 322-342 (DGVAFAVLLANITVPLIDYYT).

This sequence belongs to the NqrB/RnfD family. As to quaternary structure, the complex is composed of six subunits: RsxA, RsxB, RsxC, RsxD, RsxE and RsxG. It depends on FMN as a cofactor.

The protein localises to the cell inner membrane. Part of a membrane-bound complex that couples electron transfer with translocation of ions across the membrane. Required to maintain the reduced state of SoxR. Probably transfers electron from NAD(P)H to SoxR. This Escherichia coli (strain K12) protein is Ion-translocating oxidoreductase complex subunit D.